The primary structure comprises 230 residues: Large ribosomal subunit protein uL1 (230 aa).

The protein belongs to the universal ribosomal protein uL1 family. Part of the 50S ribosomal subunit.

In terms of biological role, binds directly to 23S rRNA. The L1 stalk is quite mobile in the ribosome, and is involved in E site tRNA release. Functionally, protein L1 is also a translational repressor protein, it controls the translation of the L11 operon by binding to its mRNA. The chain is Large ribosomal subunit protein uL1 from Caldicellulosiruptor bescii (strain ATCC BAA-1888 / DSM 6725 / KCTC 15123 / Z-1320) (Anaerocellum thermophilum).